The following is a 217-amino-acid chain: Rhicadhesin receptor (217 aa).

Residues 1-20 form the signal peptide; sequence MKLIAVLLLVVLATATTATA. A disulfide bond links Cys-30 and Cys-45. N-linked (GlcNAc...) asparagine glycans are attached at residues Asn-50 and Asn-68. In terms of domain architecture, Cupin type-1 spans 58–207; sequence SNLLVKQGAT…AFQIGTKEVQ (150 aa). Mn(2+) contacts are provided by His-107, His-109, Glu-114, and His-153.

The protein belongs to the germin family. In terms of processing, glycosylated.

It localises to the secreted. The protein resides in the extracellular space. The protein localises to the apoplast. It is found in the cell wall. Functionally, putative receptor for bacterial rhicadhesin, an attachment protein of rhizobiaceae. This chain is Rhicadhesin receptor (GER1), found in Pisum sativum (Garden pea).